We begin with the raw amino-acid sequence, 456 residues long: Protein king tubby (456 aa).

The tract at residues 111–202 is disordered; it reads HELEDEESSP…SNGAGGESEG (92 aa). The span at 120-152 shows a compositional bias: polar residues; that stretch reads PVTVIEQQQTAPHSANSTHSQRPSTTRQPSFND. A Phosphoserine modification is found at Ser-149.

Belongs to the TUB family.

It localises to the cytoplasm. Its subcellular location is the nucleus. The protein localises to the cell projection. It is found in the cilium membrane. The protein resides in the rhabdomere. This is Protein king tubby from Drosophila pseudoobscura pseudoobscura (Fruit fly).